We begin with the raw amino-acid sequence, 297 residues long: 4-hydroxy-tetrahydrodipicolinate synthase (297 aa).

Threonine 47 is a pyruvate binding site. The active-site Proton donor/acceptor is tyrosine 135. Lysine 163 acts as the Schiff-base intermediate with substrate in catalysis. Isoleucine 205 serves as a coordination point for pyruvate.

This sequence belongs to the DapA family. Homotetramer; dimer of dimers.

Its subcellular location is the cytoplasm. The enzyme catalyses L-aspartate 4-semialdehyde + pyruvate = (2S,4S)-4-hydroxy-2,3,4,5-tetrahydrodipicolinate + H2O + H(+). The protein operates within amino-acid biosynthesis; L-lysine biosynthesis via DAP pathway; (S)-tetrahydrodipicolinate from L-aspartate: step 3/4. Functionally, catalyzes the condensation of (S)-aspartate-beta-semialdehyde [(S)-ASA] and pyruvate to 4-hydroxy-tetrahydrodipicolinate (HTPA). This chain is 4-hydroxy-tetrahydrodipicolinate synthase, found in Cytophaga hutchinsonii (strain ATCC 33406 / DSM 1761 / CIP 103989 / NBRC 15051 / NCIMB 9469 / D465).